We begin with the raw amino-acid sequence, 307 residues long: Methionyl-tRNA formyltransferase (307 aa).

108–111 (SLLP) is a binding site for (6S)-5,6,7,8-tetrahydrofolate.

The protein belongs to the Fmt family.

It catalyses the reaction L-methionyl-tRNA(fMet) + (6R)-10-formyltetrahydrofolate = N-formyl-L-methionyl-tRNA(fMet) + (6S)-5,6,7,8-tetrahydrofolate + H(+). In terms of biological role, attaches a formyl group to the free amino group of methionyl-tRNA(fMet). The formyl group appears to play a dual role in the initiator identity of N-formylmethionyl-tRNA by promoting its recognition by IF2 and preventing the misappropriation of this tRNA by the elongation apparatus. In Renibacterium salmoninarum (strain ATCC 33209 / DSM 20767 / JCM 11484 / NBRC 15589 / NCIMB 2235), this protein is Methionyl-tRNA formyltransferase.